A 473-amino-acid polypeptide reads, in one-letter code: MSTSLETPSGTSAGPSIVASGLPPLADLVRAGSKRTRVVYGAETSAVEDDGLARANKIKLATKLAIEYKDVQTLPPILQAQQTGPAGPKRPTQPSIAASATAGPNVKLIGGPEAEKASSSTPQAVAEPRSLVKFRHQEGFAAEGGQATSRLSQALMRKKEAREVKPEYHPEWKLTRVISGHMGWVRAVAMDPGSQWFATGAGDRVIKIWDLASGELKLSLTGHISTIRGLAVSDRHPYLFSCAEDKMVKCWDLETNKVIRHYHGHFSGVYSLSVHPTLDVLVTGGRDASVRVWDMRTRANIFTLTGHTSTVGDVKTQDSDPQIISGSMDSTVRLWDLAAGKCMNTLTHHKKSVRALAIHPTEYSFASASSGGNNIKKWKCPEGIFVNNFVGHEAIINTLSINSENVLFSGADNGTLTLWDYKTGLPFQHLKDIPQPGSLDAEAGVFCSTFDKTGTRLITGGADKTIKVYSEQA.

Positions 1–14 (MSTSLETPSGTSAG) are enriched in polar residues. 2 disordered regions span residues 1–21 (MSTS…VASG) and 103–126 (GPNV…QAVA). WD repeat units follow at residues 180–219 (GHMG…LKLS), 222–261 (GHIS…VIRH), 264–303 (GHFS…NIFT), 306–347 (GHTS…NTLT), 349–388 (HKKS…FVNN), 391–429 (GHEA…PFQH), and 440–473 (DAEA…SEQA).

Belongs to the WD repeat PRL1/PRL2 family. Associated with the spliceosome.

Its subcellular location is the cytoplasm. It localises to the nucleus. Its function is as follows. Involved in pre-mRNA splicing and required for cell cycle progression at G2/M. This Cryptococcus neoformans var. neoformans serotype D (strain B-3501A) (Filobasidiella neoformans) protein is Pre-mRNA-splicing factor PRP46 (PRP46).